Reading from the N-terminus, the 179-residue chain is Early E3 20.1 kDa glycoprotein (179 aa).

Asparagine 29, asparagine 57, asparagine 70, asparagine 75, and asparagine 123 each carry an N-linked (GlcNAc...) asparagine; by host glycan.

Belongs to the adenoviridae E3_20 family.

E3 proteins seem to be dispensable for virus growth in tissue culture cells. They are potentially important for virus growth under special conditions; E3 region may help adenoviruses to evade the immune surveillance of the host. This is Early E3 20.1 kDa glycoprotein from Homo sapiens (Human).